The following is a 235-amino-acid chain: UPF0758 protein COPRO5265_1522 (235 aa).

Residues 109–235 (RITTPEDAIE…HVSLAREKLI (127 aa)) form the MPN domain. Residues histidine 184, histidine 186, and aspartate 197 each contribute to the Zn(2+) site. The JAMM motif motif lies at 184 to 197 (HNHPSGDPSPSRED).

The protein belongs to the UPF0758 family.

The polypeptide is UPF0758 protein COPRO5265_1522 (Coprothermobacter proteolyticus (strain ATCC 35245 / DSM 5265 / OCM 4 / BT)).